The sequence spans 413 residues: Probable elongation factor 1-gamma 2 (413 aa).

Residues 1–82 (MALVMHTYKG…YVSRKNGDNS (82 aa)) enclose the GST N-terminal domain. The region spanning 87–215 (SLIEYAHIEQ…AKQTEAVPPV (129 aa)) is the GST C-terminal domain. The tract at residues 207 to 260 (KQTEAVPPVPTKKAPQPAKPKEEPKKAAPVAEAPKPAEEEEAPKPKAKNPLDLL) is disordered. The EF-1-gamma C-terminal domain occupies 253–413 (AKNPLDLLPP…EALLDAKCFK (161 aa)).

In terms of assembly, EF-1 is composed of four subunits: alpha, beta, delta, and gamma.

Probably plays a role in anchoring the complex to other cellular components. The protein is Probable elongation factor 1-gamma 2 of Arabidopsis thaliana (Mouse-ear cress).